The primary structure comprises 246 residues: Hydroxyacylglutathione hydrolase (246 aa).

Zn(2+) contacts are provided by His-58, His-60, Asp-62, His-63, His-117, Asp-137, and His-175.

Belongs to the metallo-beta-lactamase superfamily. Glyoxalase II family. In terms of assembly, monomer. The cofactor is Zn(2+).

The enzyme catalyses an S-(2-hydroxyacyl)glutathione + H2O = a 2-hydroxy carboxylate + glutathione + H(+). The protein operates within secondary metabolite metabolism; methylglyoxal degradation; (R)-lactate from methylglyoxal: step 2/2. In terms of biological role, thiolesterase that catalyzes the hydrolysis of S-D-lactoyl-glutathione to form glutathione and D-lactic acid. The protein is Hydroxyacylglutathione hydrolase of Prochlorococcus marinus (strain MIT 9312).